Consider the following 505-residue polypeptide: N-succinylglutamate 5-semialdehyde dehydrogenase (505 aa).

234–239 (GSAHTG) contacts NAD(+). Catalysis depends on residues Glu-257 and Cys-291.

Belongs to the aldehyde dehydrogenase family. AstD subfamily.

The catalysed reaction is N-succinyl-L-glutamate 5-semialdehyde + NAD(+) + H2O = N-succinyl-L-glutamate + NADH + 2 H(+). Its pathway is amino-acid degradation; L-arginine degradation via AST pathway; L-glutamate and succinate from L-arginine: step 4/5. Functionally, catalyzes the NAD-dependent reduction of succinylglutamate semialdehyde into succinylglutamate. In Yersinia pseudotuberculosis serotype IB (strain PB1/+), this protein is N-succinylglutamate 5-semialdehyde dehydrogenase.